The primary structure comprises 725 residues: Calcium-responsive transcription factor (725 aa).

The tract at residues 572-592 (TSPDESPAVVSVNNQPSSSPS) is disordered. Low complexity predominate over residues 577-592 (SPAVVSVNNQPSSSPS).

The protein resides in the nucleus. Its function is as follows. Acts as a transcriptional activator that mediates the calcium- and neuron-selective induction of BDNF exon III transcription. Binds to the consensus calcium-response element CaRE1 5'-CTATTTCGAG-3' sequence. In Homo sapiens (Human), this protein is Calcium-responsive transcription factor (CARF).